The following is a 250-amino-acid chain: 23S rRNA (guanine(2535)-N(1))-methyltransferase (250 aa).

It carries out the reaction guanosine(2535) in 23S rRNA + S-adenosyl-L-methionine = N(1)-methylguanosine(2535) in 23S rRNA + S-adenosyl-L-homocysteine + H(+). In terms of biological role, specifically methylates the guanine-2535 in 23S ribosomal RNA. Confers resistance to antibiotic avilamycin, an orthosomycin antibiotic. The protein is 23S rRNA (guanine(2535)-N(1))-methyltransferase (aviRa) of Streptomyces viridochromogenes.